Here is a 323-residue protein sequence, read N- to C-terminus: uncharacterized protein (323 aa).

Transmembrane regions (helical) follow at residues 232 to 252 (LASY…FIVL) and 267 to 287 (SLIV…GVIG).

It belongs to the glycosyltransferase 2 family. GtrB subfamily.

It is found in the cell membrane. This is an uncharacterized protein from Bacillus subtilis (strain 168).